The sequence spans 396 residues: Elongation factor Tu (396 aa).

One can recognise a tr-type G domain in the interval 10–206 (KPHCNIGTIG…AVDSYIPQPE (197 aa)). The interval 19–26 (GHVDHGKT) is G1. A GTP-binding site is contributed by 19–26 (GHVDHGKT). Thr26 is a binding site for Mg(2+). Positions 60–64 (GITIS) are G2. The tract at residues 81–84 (DCPG) is G3. GTP-binding positions include 81–85 (DCPGH) and 136–139 (NKCD). A G4 region spans residues 136–139 (NKCD). Positions 174–176 (SAL) are G5.

Belongs to the TRAFAC class translation factor GTPase superfamily. Classic translation factor GTPase family. EF-Tu/EF-1A subfamily. Monomer.

The protein resides in the cytoplasm. It catalyses the reaction GTP + H2O = GDP + phosphate + H(+). In terms of biological role, GTP hydrolase that promotes the GTP-dependent binding of aminoacyl-tRNA to the A-site of ribosomes during protein biosynthesis. In Rhodopseudomonas palustris (strain BisA53), this protein is Elongation factor Tu.